The primary structure comprises 200 residues: Pyridoxine/pyridoxamine 5'-phosphate oxidase (200 aa).

Residues 49–54 (RMLLLK), 64–65 (YT), R70, K71, and Q93 each bind FMN. K54 contributes to the substrate binding site. 3 residues coordinate substrate: Y111, R115, and S119. FMN-binding positions include 128–129 (QS) and W173. 179-181 (RLH) lines the substrate pocket. Residue R183 participates in FMN binding.

The protein belongs to the pyridoxamine 5'-phosphate oxidase family. In terms of assembly, homodimer. It depends on FMN as a cofactor.

The catalysed reaction is pyridoxamine 5'-phosphate + O2 + H2O = pyridoxal 5'-phosphate + H2O2 + NH4(+). It carries out the reaction pyridoxine 5'-phosphate + O2 = pyridoxal 5'-phosphate + H2O2. It functions in the pathway cofactor metabolism; pyridoxal 5'-phosphate salvage; pyridoxal 5'-phosphate from pyridoxamine 5'-phosphate: step 1/1. It participates in cofactor metabolism; pyridoxal 5'-phosphate salvage; pyridoxal 5'-phosphate from pyridoxine 5'-phosphate: step 1/1. Catalyzes the oxidation of either pyridoxine 5'-phosphate (PNP) or pyridoxamine 5'-phosphate (PMP) into pyridoxal 5'-phosphate (PLP). This Gluconobacter oxydans (strain 621H) (Gluconobacter suboxydans) protein is Pyridoxine/pyridoxamine 5'-phosphate oxidase.